Reading from the N-terminus, the 551-residue chain is Palmdelphin (551 aa).

The residue at position 1 (M1) is an N-acetylmethionine. Residues 2–106 are a coiled coil; that stretch reads EEAELVKERL…LQISTNEEAI (105 aa). A Glycyl lysine isopeptide (Lys-Gly) (interchain with G-Cter in SUMO2) cross-link involves residue K125. S135 is modified (phosphoserine). Residue K179 forms a Glycyl lysine isopeptide (Lys-Gly) (interchain with G-Cter in SUMO1); alternate linkage. K179 participates in a covalent cross-link: Glycyl lysine isopeptide (Lys-Gly) (interchain with G-Cter in SUMO2); alternate. The segment covering 247–259 has biased composition (basic and acidic residues); sequence SERNSKSPTEYHD. 2 disordered regions span residues 247–393 and 450–529; these read SERN…EDEE and EEEE…IAGD. The residue at position 271 (T271) is a Phosphothreonine. 4 positions are modified to phosphoserine: S321, S370, S384, and S385. Residues 484–495 are compositionally biased toward basic and acidic residues; the sequence is KRAEVNPHENTN. 3 positions are modified to phosphoserine: S498, S515, and S520.

It belongs to the paralemmin family. In terms of assembly, interacts with GLUL. Cell projection, dendrite. Cell projection, dendritic spine. In terms of processing, phosphorylated.

It localises to the cytoplasm. The protein resides in the cell projection. The protein localises to the dendrite. Its subcellular location is the dendritic spine. This Sus scrofa (Pig) protein is Palmdelphin (PALMD).